The sequence spans 287 residues: ATP synthase gamma chain (287 aa).

It belongs to the ATPase gamma chain family. As to quaternary structure, F-type ATPases have 2 components, CF(1) - the catalytic core - and CF(0) - the membrane proton channel. CF(1) has five subunits: alpha(3), beta(3), gamma(1), delta(1), epsilon(1). CF(0) has three main subunits: a, b and c.

The protein localises to the cell inner membrane. Its function is as follows. Produces ATP from ADP in the presence of a proton gradient across the membrane. The gamma chain is believed to be important in regulating ATPase activity and the flow of protons through the CF(0) complex. The chain is ATP synthase gamma chain from Yersinia pestis.